A 94-amino-acid chain; its full sequence is uncharacterized protein (94 aa).

The next 2 membrane-spanning stretches (helical) occupy residues 9–29 (TLAK…FFST) and 34–54 (LIEL…VFIV).

Its subcellular location is the cell membrane. This is an uncharacterized protein from Bacillus subtilis (strain 168).